Consider the following 194-residue polypeptide: Ubiquitin-conjugating enzyme E2 T (194 aa).

Residues 2-152 (QRVSRLKREM…AKKWTAEHAI (151 aa)) form the UBC core domain. Catalysis depends on Cys-86, which acts as the Glycyl thioester intermediate. Basic and acidic residues-rich tracts occupy residues 158-170 (CVET…ENKN) and 185-194 (NLEHTKKVCL). The tract at residues 158-194 (CVETDGKTPENKNLKTSHKREALSAQENLEHTKKVCL) is disordered.

The protein belongs to the ubiquitin-conjugating enzyme family.

It localises to the nucleus. The enzyme catalyses S-ubiquitinyl-[E1 ubiquitin-activating enzyme]-L-cysteine + [E2 ubiquitin-conjugating enzyme]-L-cysteine = [E1 ubiquitin-activating enzyme]-L-cysteine + S-ubiquitinyl-[E2 ubiquitin-conjugating enzyme]-L-cysteine.. Its pathway is protein modification; protein ubiquitination. Accepts ubiquitin from the E1 complex and catalyzes its covalent attachment to other proteins. Catalyzes monoubiquitination. Involved in DNA repair. This chain is Ubiquitin-conjugating enzyme E2 T (ube2t), found in Danio rerio (Zebrafish).